The chain runs to 1100 residues: Conjugal transfer protein TraA (1100 aa).

404–411 (GRAGAGKT) lines the ATP pocket.

Belongs to the MobA/MobL family.

The sequence is that of Conjugal transfer protein TraA (traA) from Agrobacterium fabrum (strain C58 / ATCC 33970) (Agrobacterium tumefaciens (strain C58)).